Reading from the N-terminus, the 920-residue chain is MADQSLLHSPINPHFFQPILTESRTHLNIPVAFFSKHVEGRNNQNKTVTLRSDASDKTWLVKMDGLKLTDGWEDFAFAHDLRTGDIVVFRLEGEMVFHVTALGPSCCEIQYHTSSHNINDDDRNDQINIASRNSSRVKKNPRKKVESSLDHSRFVAKVSAWCLSNDRLYIPLSFARLNGLNKINSKKIYLQNEEGRSWKLVLRHDKSGMQTFVQSGWRRFCSENGIRQGQYTFKLVRKSAPPVIRLCRAKAKPKQRSVAEYSSDHSCFEGSVTPSSLRNDLLYLPRSFVNSNRLDKRCSEIVLKNEQGVKWPLVLKRFKSVTYLPKGWTSFCQVNRIKAGDSFKFKLVGTWKKPVLSLCPTQSNNHKTPLECSEGNKSEESEEDCLEVKKKKYWSRCRASVENMDDDQTNIGNSSRKKRVSKNPREKVESSSDHSSFVGSVNPSSLYKDQLYLPRNFVSSNFLDKRCSEIVLKNERGEKRTLVLKHFKKDLTFLKKGWTSFCQVNRIKAGDSFKFKLVGTWNKPVLSLCPTETNYHKTPLACSEGNKSEESEEEGTEDKNTSQDCLEVKKRKYWSTCRASAENIDDDQTNIGNSSKEKRVKKNPVKKAESSSDHSSFVANVTASSLNYDRLYLPLSFVSSNGLDKMNGKEIVLLNEEGLSWKFNLKYNQAGKHTYVRPGWSRFCDANGMSQGQQFTFKLVQKHGPPVMYLSLSEHRPKSESSSHRSYFVGSVTASSIKKDKLYLWKSFVSSNGLDKGCKKIILKNKWGREWKLVLKHYKSNCFTIIKRGWTSFCQGNGLKAGDSFKFKLVGTGEKPVLSLCPAESSHEKIPLECPEGIDDVNSLSSNPSSGDDSSRSEESEEENMEDKNISQDCLETKKRKYCSSSSYSQNRFVTLTLTRSAFQTYKLVSFFNNYASRLS.

DNA-binding regions (TF-B3) lie at residues 12–105 (NPHF…LGPS), 153–250 (RFVA…CRAK), and 267–361 (CFEG…LCPT). Disordered stretches follow at residues 405-438 (DDDQ…SSFV), 540-562 (LACS…KNTS), and 585-614 (DDDQ…SSDH). Basic and acidic residues predominate over residues 423 to 432 (NPREKVESSS). The TF-B3 4 DNA-binding region spans 436-531 (SFVGSVNPSS…NKPVLSLCPT (96 aa)). 2 DNA-binding regions (TF-B3) span residues 616–714 (SFVA…SLSE) and 727–823 (YFVG…LCPA). Residues 842 to 852 (NSLSSNPSSGD) are compositionally biased toward low complexity. A disordered region spans residues 842-870 (NSLSSNPSSGDDSSRSEESEEENMEDKNI).

Its subcellular location is the nucleus. This chain is B3 domain-containing protein REM17 (REM17), found in Arabidopsis thaliana (Mouse-ear cress).